A 585-amino-acid chain; its full sequence is Protein FAM13C (585 aa).

Disordered regions lie at residues 26–45, 83–138, and 171–216; these read PVSL…ENNK, SMGN…NAFK, and EAAQ…APED. Composition is skewed to basic and acidic residues over residues 27–45 and 99–112; these read VSLH…ENNK and ESGR…ETEH. Residue Ser-131 is modified to Phosphoserine. At Ser-238 the chain carries Phosphoserine. Disordered stretches follow at residues 250 to 282, 349 to 391, and 441 to 477; these read FNLD…DGKE, EEQG…EETP, and IPTI…DHLT. Residues 262-275 show a composition bias toward polar residues; the sequence is STQQFMMPRSSSRC. 2 positions are modified to phosphoserine: Ser-385 and Ser-386.

The protein belongs to the FAM13 family.

The protein is Protein FAM13C (FAM13C) of Homo sapiens (Human).